The sequence spans 958 residues: Probable transport protein MmpL1 (958 aa).

Transmembrane regions (helical) follow at residues 19–39 (ALSLPIILFWVALTIVVNVVA), 192–212 (SLHTITGISIAVIAIMLFIAY), 216–236 (SAALIMLLTVGLELLAVRGII), 252–272 (VNVLVALTIAASTDYIIFLVG), 295–315 (TAHVVLASGLTVAGAMYCLGF), 329–349 (AIGLVTVMLASLTLAPAIIAV), 377–397 (WPGPVLAATLLIALIGLLALP), 762–782 (YDVMIAVVASLCLIFIIMLGI), 791–811 (VIVGTVALSLGSAFGLSVLIW), 814–834 (ILHMPLHWLVLPMAIIVMLAV), 868–888 (VVTIAGLVFAFTMGSMVASDL), and 906–927 (TLVVRSYMTPALATLLGRWFWW).

This sequence belongs to the resistance-nodulation-cell division (RND) (TC 2.A.6) family. MmpL subfamily.

It is found in the cell membrane. The protein is Probable transport protein MmpL1 (mmpL1) of Mycobacterium tuberculosis (strain CDC 1551 / Oshkosh).